The chain runs to 340 residues: MKEQLEQLQVEALEEIKQASTQKSLNDVRIKYLGKKGPMTEVLRGMGKLSAEERPIIGELANTVRTAIQSTLDARIEEVKAIELEEKLKAETLDVTLPGRTSTPGHSHLLQQIIDEMEDLFVGLGYTIAEGPEVETDLYNFEMLNLPKDHPARDMQDSFYITEETLLRTHTSPVQARTMLEANGKPIRIICPGKVYRRDEDDATHSHQFMQIEGLVVDESISMADLKGTLEVFVKQLFGETREIRLRPSFFPFTEPSVEVDISCFKCGGKGCNVCKGTGWIEILGGGMVHPHVLEMAGYDSSKVSGFAFGIGVERMAMLKHGVDDIRHFYTNDLRFIEQF.

Residue glutamate 255 coordinates Mg(2+).

This sequence belongs to the class-II aminoacyl-tRNA synthetase family. Phe-tRNA synthetase alpha subunit type 1 subfamily. In terms of assembly, tetramer of two alpha and two beta subunits. Mg(2+) is required as a cofactor.

It is found in the cytoplasm. The catalysed reaction is tRNA(Phe) + L-phenylalanine + ATP = L-phenylalanyl-tRNA(Phe) + AMP + diphosphate + H(+). The protein is Phenylalanine--tRNA ligase alpha subunit of Exiguobacterium sp. (strain ATCC BAA-1283 / AT1b).